The primary structure comprises 541 residues: Major facilitator-type transporter ecdD (541 aa).

Residues 15–35 (AWPAILISGFVAFGGILFGYD) form a helical membrane-spanning segment. N-linked (GlcNAc...) asparagine glycosylation is present at Asn64. Helical transmembrane passes span 72–92 (AIVSILSAGTFFGALGASPMG), 106–126 (GIFVLGVVLQTIATSIPPFLA), 129–149 (FFAGLGVGLISALVPLYQSET), and 156–176 (GFIVGAYQFAITVGLLLASVL). 2 N-linked (GlcNAc...) asparagine glycosylation sites follow: Asn178 and Asn184. A helical transmembrane segment spans residues 191–211 (IPIAVQFAWSIILVGGMLILP). N-linked (GlcNAc...) asparagine glycosylation occurs at Asn253. Transmembrane regions (helical) follow at residues 277–297 (LVTGCLLQALQQLSGINFIMY), 313–333 (VITLITNCVNVGSTLPGLYAI), 340–360 (PVLLTGAIGMAVSQLLVAVLG), 384–404 (IAFICLYIFFFAASWGPSAWV), 418–440 (SLSMTTATNWLLNWALSFSTPYL), and 454–474 (IFFIWFGCCFLCIGFVHFMIY).

This sequence belongs to the major facilitator superfamily. Sugar transporter (TC 2.A.1.1) family.

The protein resides in the membrane. The sequence is that of Major facilitator-type transporter ecdD from Aspergillus rugulosus (Emericella rugulosa).